Reading from the N-terminus, the 129-residue chain is 3-oxo-4,17-pregnadiene-20-carboxyl-CoA hydratase beta subunit (129 aa).

It belongs to the thioester dehydratase family. As to quaternary structure, heterodimer composed of ChsH1 and ChsH2. Two heterodimers combine to form a heterotetramer. The complex interacts with Ltp2 via the DUF35 C-terminal region of ChsH2. The ChsH1-ChsH2-Ltp2 protein complex is composed of two protomers that form a heterohexameric structure through the Ltp2 dimerization interface.

It carries out the reaction 3-oxochola-4,17-dien-22-oyl-CoA + H2O = 17-hydroxy-3-oxochol-4-en-22-oyl-CoA. It catalyses the reaction (2E)-octenoyl-CoA + H2O = 3-hydroxyoctanoyl-CoA. The enzyme catalyses (2E)-decenoyl-CoA + H2O = 3-hydroxydecanoyl-CoA. It functions in the pathway steroid metabolism; cholesterol degradation. In the absence of the Ltp2 aldolase, ChsH1/ChsH2 can hydrate only about 30% of the 3-OPDC-CoA substrate. Complete turnover requires the presence of Ltp2. Functionally, involved in cholesterol side chain degradation. Catalyzes the hydration of 3-oxo-4,17-pregnadiene-20-carboxyl-CoA (3-OPDC-CoA) to form 17-hydroxy-3-oxo-4-pregnene-20-carboxyl-CoA (17-HOPC-CoA), in the modified beta-oxidation pathway for cholesterol side chain degradation. Can also use octenoyl-CoA and decenoyl-CoA, with lower efficiency. The polypeptide is 3-oxo-4,17-pregnadiene-20-carboxyl-CoA hydratase beta subunit (Mycobacterium tuberculosis (strain ATCC 25618 / H37Rv)).